A 1462-amino-acid chain; its full sequence is Gag-Pro-Pol polyprotein (1462 aa).

G2 carries N-myristoyl glycine; by host lipidation. The tract at residues 93–143 is disordered; sequence QIPSHPAPPPPSSPTHDPPDSDPQIPPPYVEPTAPQVLPVMHPHGVPPTHR. At S105 the chain carries Phosphoserine; by host MAPK1. Residues 118–121 carry the PPXY motif motif; that stretch reads PPPY. The short motif at 124–127 is the PTAP/PSAP motif element; the sequence is PTAP. CCHC-type zinc fingers lie at residues 355 to 372 and 378 to 395; these read QPCF…DCAQ and GPCP…DCPR. The Peptidase A2 domain maps to 476–554; it reads IEALLDTGAD…NNWAIIGRDA (79 aa). Catalysis depends on D481, which acts as the For protease activity; shared with dimeric partner. The Reverse transcriptase domain maps to 614–804; sequence LEAGHIEPYT…GTIKFLGQII (191 aa). Mg(2+)-binding residues include D680, D755, D756, D1040, E1074, D1096, D1157, D1230, and D1287. Residues 1031 to 1165 enclose the RNase H type-1 domain; it reads INTAPCLFSD…TDALLITPIL (135 aa). The 170-residue stretch at 1219-1388 folds into the Integrase catalytic domain; the sequence is RGLLPNHIWQ…QPIPETHSLI (170 aa). Residues 1393-1443 constitute a DNA-binding region (integrase-type); that stretch reads HWYYFKLPGLNSRQWKGPQEALQEAAGAALIPVSANSAQWIPWRLLKQAAC.

Homodimer; the homodimers are part of the immature particles. Interacts with human TSG101 and NEDD4; these interactions are essential for budding and release of viral particles. As to quaternary structure, homodimer; further assembles as homohexamers. It depends on Mg(2+) as a cofactor. In terms of processing, phosphorylation of the matrix protein p19 by MAPK1 seems to play a role in budding. Post-translationally, myristoylated. Myristoylation of the matrix (MA) domain mediates the transport and binding of Gag polyproteins to the host plasma membrane and is required for the assembly of viral particles. Specific enzymatic cleavages by the viral protease yield mature proteins. The polyprotein is cleaved during and after budding, this process is termed maturation. The protease is autoproteolytically processed at its N- and C-termini.

It localises to the virion. It carries out the reaction Endonucleolytic cleavage to 5'-phosphomonoester.. The enzyme catalyses DNA(n) + a 2'-deoxyribonucleoside 5'-triphosphate = DNA(n+1) + diphosphate. Functionally, the matrix domain targets Gag, Gag-Pro and Gag-Pro-Pol polyproteins to the plasma membrane via a multipartite membrane binding signal, that includes its myristoylated N-terminus. Matrix protein. In terms of biological role, forms the spherical core of the virus that encapsulates the genomic RNA-nucleocapsid complex. Its function is as follows. Binds strongly to viral nucleic acids and promote their aggregation. Also destabilizes the nucleic acids duplexes via highly structured zinc-binding motifs. Functionally, the aspartyl protease mediates proteolytic cleavages of Gag and Gag-Pol polyproteins during or shortly after the release of the virion from the plasma membrane. Cleavages take place as an ordered, step-wise cascade to yield mature proteins. This process is called maturation. Displays maximal activity during the budding process just prior to particle release from the cell (Potential). Cleaves the translation initiation factor eIF4G leading to the inhibition of host cap-dependent translation. RT is a multifunctional enzyme that converts the viral RNA genome into dsDNA in the cytoplasm, shortly after virus entry into the cell. This enzyme displays a DNA polymerase activity that can copy either DNA or RNA templates, and a ribonuclease H (RNase H) activity that cleaves the RNA strand of RNA-DNA heteroduplexes in a partially processive 3' to 5'-endonucleasic mode. Conversion of viral genomic RNA into dsDNA requires many steps. A tRNA-Pro binds to the primer-binding site (PBS) situated at the 5'-end of the viral RNA. RT uses the 3' end of the tRNA primer to perform a short round of RNA-dependent minus-strand DNA synthesis. The reading proceeds through the U5 region and ends after the repeated (R) region which is present at both ends of viral RNA. The portion of the RNA-DNA heteroduplex is digested by the RNase H, resulting in a ssDNA product attached to the tRNA primer. This ssDNA/tRNA hybridizes with the identical R region situated at the 3' end of viral RNA. This template exchange, known as minus-strand DNA strong stop transfer, can be either intra- or intermolecular. RT uses the 3' end of this newly synthesized short ssDNA to perform the RNA-dependent minus-strand DNA synthesis of the whole template. RNase H digests the RNA template except for a polypurine tract (PPT) situated at the 5' end of the genome. It is not clear if both polymerase and RNase H activities are simultaneous. RNase H probably can proceed both in a polymerase-dependent (RNA cut into small fragments by the same RT performing DNA synthesis) and a polymerase-independent mode (cleavage of remaining RNA fragments by free RTs). Secondly, RT performs DNA-directed plus-strand DNA synthesis using the PPT that has not been removed by RNase H as primer. PPT and tRNA primers are then removed by RNase H. The 3' and 5' ssDNA PBS regions hybridize to form a circular dsDNA intermediate. Strand displacement synthesis by RT to the PBS and PPT ends produces a blunt ended, linear dsDNA copy of the viral genome that includes long terminal repeats (LTRs) at both ends. In terms of biological role, catalyzes viral DNA integration into the host chromosome, by performing a series of DNA cutting and joining reactions. The protein is Gag-Pro-Pol polyprotein (gag-pro-pol) of Homo sapiens (Human).